The primary structure comprises 262 residues: MRIQIEKDQLGWVAGLLDSCGNIMFSKTHVSGNIEIKLKLTDYECLENMKTKYGGAVKVSRTGTRYRLNHSEGLKKLLEDINGQIRIPVRVKKVKEVCEKNNIEIKYPDKELSLDTAWLSGFFDGVGSIVINQTTLENKKQLVLTFNQKNNQILIKIQRIVGGNFYINTNTQSGKYKYALYFTSKEEILQLYEYFKKYPSRAYKNKRIGLIPQYYELQTLMTSIHDNQLQETLWKKFMIQWDYKEIDEIQSGEILKQKGVIR.

This sequence belongs to the LAGLIDADG endonuclease family.

It is found in the mitochondrion. Mitochondrial DNA endonuclease involved in intron homing. In Dictyostelium discoideum (Social amoeba), this protein is Intron-encoded DNA endonuclease ai2b (ai2b).